The primary structure comprises 519 residues: 2-isopropylmalate synthase (519 aa).

In terms of domain architecture, Pyruvate carboxyltransferase spans 5 to 267 (VIIFDTTLRD…QTRINHKEIY (263 aa)). Mn(2+) is bound by residues Asp14, His202, His204, and Asn238. Positions 392 to 519 (VMNYFNTQSG…RKHHTTQEAV (128 aa)) are regulatory domain.

This sequence belongs to the alpha-IPM synthase/homocitrate synthase family. LeuA type 1 subfamily. As to quaternary structure, homodimer. Mn(2+) is required as a cofactor.

The protein localises to the cytoplasm. The enzyme catalyses 3-methyl-2-oxobutanoate + acetyl-CoA + H2O = (2S)-2-isopropylmalate + CoA + H(+). Its pathway is amino-acid biosynthesis; L-leucine biosynthesis; L-leucine from 3-methyl-2-oxobutanoate: step 1/4. Catalyzes the condensation of the acetyl group of acetyl-CoA with 3-methyl-2-oxobutanoate (2-ketoisovalerate) to form 3-carboxy-3-hydroxy-4-methylpentanoate (2-isopropylmalate). The protein is 2-isopropylmalate synthase of Proteus mirabilis (strain HI4320).